Consider the following 223-residue polypeptide: UPF0641 membrane protein PJ4664.05 (223 aa).

5 helical membrane passes run 10-30 (FNSFILHTVATANLIWAFNWI), 49-69 (LTVLSLAVTLLSMVVGLFSDI), 81-101 (ILLYIVCPLETIVSILYWSIV), 146-166 (LSIGPSLLVYLSIAVSYMLWV), and 190-210 (TIFYTVASIISFSCYIVLKMV).

This sequence belongs to the UPF0641 family.

Its subcellular location is the endoplasmic reticulum membrane. This Schizosaccharomyces pombe (strain 972 / ATCC 24843) (Fission yeast) protein is UPF0641 membrane protein PJ4664.05.